Reading from the N-terminus, the 488-residue chain is ATP synthase subunit beta, chloroplastic (488 aa).

G170–T177 contributes to the ATP binding site.

It belongs to the ATPase alpha/beta chains family. As to quaternary structure, F-type ATPases have 2 components, CF(1) - the catalytic core - and CF(0) - the membrane proton channel. CF(1) has five subunits: alpha(3), beta(3), gamma(1), delta(1), epsilon(1). CF(0) has four main subunits: a(1), b(1), b'(1) and c(9-12).

Its subcellular location is the plastid. The protein localises to the chloroplast thylakoid membrane. It carries out the reaction ATP + H2O + 4 H(+)(in) = ADP + phosphate + 5 H(+)(out). Functionally, produces ATP from ADP in the presence of a proton gradient across the membrane. The catalytic sites are hosted primarily by the beta subunits. The sequence is that of ATP synthase subunit beta, chloroplastic from Picea abies (Norway spruce).